We begin with the raw amino-acid sequence, 336 residues long: Inactive serine/threonine-protein kinase PLK5 (336 aa).

Residues 1 to 65 form the Protein kinase; truncated domain; it reads MYTVLTGTPP…LDHLLQDDFF (65 aa). Disordered stretches follow at residues 109-135 and 224-245; these read PCPF…WDGE and GRTG…LPTP. Residues 255–336 form the POLO box domain; sequence LLRFLASEHA…HHALRMLQSI (82 aa).

Belongs to the protein kinase superfamily. Ser/Thr protein kinase family. CDC5/Polo subfamily. As to expression, expressed in the brain, neurons and glial cells. Also expressed in highly differentiated cells, such as the serous acini in the parotid gland, distal and proximal tubules of the kidney, tubules of the seminal gland, Kupffer cells and some hepatocytes in the liver, and some cells in the germinal center of lymph nodes (at protein level).

Its subcellular location is the nucleus. It is found in the nucleolus. It localises to the cytoplasm. In terms of biological role, inactive serine/threonine-protein kinase that plays a role in cell cycle progression and neuronal differentiation. This Homo sapiens (Human) protein is Inactive serine/threonine-protein kinase PLK5 (PLK5).